Consider the following 370-residue polypeptide: Glutamate 5-kinase (370 aa).

Lysine 11 lines the ATP pocket. Serine 52, aspartate 139, and asparagine 151 together coordinate substrate. Residues 171–172 (TD) and 213–219 (TGGMATK) contribute to the ATP site. Residues 278-356 (TGKLLLDAGA…DQIVQILGYE (79 aa)) form the PUA domain.

The protein belongs to the glutamate 5-kinase family.

It is found in the cytoplasm. It carries out the reaction L-glutamate + ATP = L-glutamyl 5-phosphate + ADP. It participates in amino-acid biosynthesis; L-proline biosynthesis; L-glutamate 5-semialdehyde from L-glutamate: step 1/2. Functionally, catalyzes the transfer of a phosphate group to glutamate to form L-glutamate 5-phosphate. In Synechococcus sp. (strain ATCC 27144 / PCC 6301 / SAUG 1402/1) (Anacystis nidulans), this protein is Glutamate 5-kinase.